A 404-amino-acid chain; its full sequence is Probable tRNA sulfurtransferase (404 aa).

The 106-residue stretch at 60–165 (QPIVEALKLV…DEAAYISYEE (106 aa)) folds into the THUMP domain. Residues 183 to 184 (ML), 208 to 209 (HF), arginine 265, glycine 287, and glutamine 296 each bind ATP.

This sequence belongs to the ThiI family.

The protein resides in the cytoplasm. The enzyme catalyses [ThiI sulfur-carrier protein]-S-sulfanyl-L-cysteine + a uridine in tRNA + 2 reduced [2Fe-2S]-[ferredoxin] + ATP + H(+) = [ThiI sulfur-carrier protein]-L-cysteine + a 4-thiouridine in tRNA + 2 oxidized [2Fe-2S]-[ferredoxin] + AMP + diphosphate. The catalysed reaction is [ThiS sulfur-carrier protein]-C-terminal Gly-Gly-AMP + S-sulfanyl-L-cysteinyl-[cysteine desulfurase] + AH2 = [ThiS sulfur-carrier protein]-C-terminal-Gly-aminoethanethioate + L-cysteinyl-[cysteine desulfurase] + A + AMP + 2 H(+). It participates in cofactor biosynthesis; thiamine diphosphate biosynthesis. Catalyzes the ATP-dependent transfer of a sulfur to tRNA to produce 4-thiouridine in position 8 of tRNAs, which functions as a near-UV photosensor. Also catalyzes the transfer of sulfur to the sulfur carrier protein ThiS, forming ThiS-thiocarboxylate. This is a step in the synthesis of thiazole, in the thiamine biosynthesis pathway. The sulfur is donated as persulfide by IscS. The protein is Probable tRNA sulfurtransferase of Streptococcus pyogenes serotype M2 (strain MGAS10270).